A 336-amino-acid chain; its full sequence is Phosphate acyltransferase (336 aa).

It belongs to the PlsX family. As to quaternary structure, homodimer. Probably interacts with PlsY.

It localises to the cytoplasm. It carries out the reaction a fatty acyl-[ACP] + phosphate = an acyl phosphate + holo-[ACP]. It participates in lipid metabolism; phospholipid metabolism. In terms of biological role, catalyzes the reversible formation of acyl-phosphate (acyl-PO(4)) from acyl-[acyl-carrier-protein] (acyl-ACP). This enzyme utilizes acyl-ACP as fatty acyl donor, but not acyl-CoA. This Pseudomonas putida (strain ATCC 47054 / DSM 6125 / CFBP 8728 / NCIMB 11950 / KT2440) protein is Phosphate acyltransferase.